The sequence spans 94 residues: HssA/B-like protein 51 (94 aa).

Residues 1 to 25 form a disordered region; sequence MTLFSSISSISNPMTNSKSRISSFG.

Belongs to the hssA/B family.

This chain is HssA/B-like protein 51 (hssl51), found in Dictyostelium discoideum (Social amoeba).